Here is a 138-residue protein sequence, read N- to C-terminus: D-ribose pyranase (138 aa).

His-20 acts as the Proton donor in catalysis. Substrate is bound by residues Asp-28, His-105, and 127–129 (YAN).

Belongs to the RbsD / FucU family. RbsD subfamily. In terms of assembly, homodecamer.

It is found in the cytoplasm. It catalyses the reaction beta-D-ribopyranose = beta-D-ribofuranose. It functions in the pathway carbohydrate metabolism; D-ribose degradation; D-ribose 5-phosphate from beta-D-ribopyranose: step 1/2. In terms of biological role, catalyzes the interconversion of beta-pyran and beta-furan forms of D-ribose. The sequence is that of D-ribose pyranase from Psychromonas ingrahamii (strain DSM 17664 / CCUG 51855 / 37).